We begin with the raw amino-acid sequence, 187 residues long: uncharacterized protein (187 aa).

Helical transmembrane passes span 29–50, 70–92, 128–147, and 154–176; these read IFID…VYWI, FVIG…INAY, IFFA…SVLR, and LALV…ISYL.

The protein resides in the cell membrane. This is an uncharacterized protein from Archaeoglobus fulgidus (strain ATCC 49558 / DSM 4304 / JCM 9628 / NBRC 100126 / VC-16).